Here is a 452-residue protein sequence, read N- to C-terminus: Putative tripartite motif-containing protein 49B (452 aa).

The RING-type zinc finger occupies 15 to 56; sequence CPICMNYFIDPVTIDCGHSFCRPCFYLNWKDSPFLVQCSECT. Residues 88–129 form a B box-type zinc finger; sequence SEEQMCGTHRETKKMFCEVDRSLLCLLCSSSQEHRDHRHCPI. Positions 93, 96, 115, and 121 each coordinate Zn(2+). Residues 269–452 enclose the B30.2/SPRY domain; it reads ELSAGPITGL…LRPIFCCIHF (184 aa).

This sequence belongs to the TRIM/RBCC family.

This chain is Putative tripartite motif-containing protein 49B (TRIM49B), found in Homo sapiens (Human).